Here is a 278-residue protein sequence, read N- to C-terminus: Autotransporter adhesin BtaF (278 aa).

The N-terminal stretch at 1–29 (MKLPPVFVFELVENQGLANIALIRPRVIA) is a signal peptide. The segment at 30 to 182 (PDNNLRPGGI…RAAIRQNSAA (153 aa)) is surface exposed passenger domain. The tract at residues 186–224 (LGQRVDGLQGQINSARKEARAGAANAAALSGLRYDNRPG) is outer membrane translocation of the passenger domain. Residues 225–278 (KVSIATGVGGFKGSTALAAGIGYTSKNENARYNVSVAYNEAGTSWNAGASFTLN) form a translocator domain region.

Belongs to the autotransporter-2 (AT-2) (TC 1.B.40) family. As to quaternary structure, homotrimer.

The protein localises to the cell surface. The protein resides in the cell outer membrane. In terms of biological role, participates in bacterial attachment to several surfaces, including various extracellular matrix (ECM) components and a hydrophobic abiotic surface. Involved in adhesion to host epithelial cells and is required for full virulence in mice. Also implicated in the resistance to porcine serum. The polypeptide is Autotransporter adhesin BtaF (Brucella suis biovar 1 (strain 1330)).